Consider the following 129-residue polypeptide: Large-conductance mechanosensitive channel (129 aa).

Helical transmembrane passes span 8–28 (FIMR…AAFT), 30–50 (IVKS…AGAV), and 67–87 (GAVL…FLII).

Belongs to the MscL family. As to quaternary structure, homopentamer.

It localises to the cell membrane. Channel that opens in response to stretch forces in the membrane lipid bilayer. May participate in the regulation of osmotic pressure changes within the cell. The chain is Large-conductance mechanosensitive channel from Oenococcus oeni (strain ATCC BAA-331 / PSU-1).